A 79-amino-acid chain; its full sequence is Cytochrome c-551 (79 aa).

The segment covering 1–14 (DGQSIYESGTSPTC) has biased composition (polar residues). The interval 1 to 35 (DGQSIYESGTSPTCASCHDRGTAGAPKINEPGDWD) is disordered. Heme c is bound by residues C14, C17, H18, and M55.

Post-translationally, binds 1 heme c group covalently per subunit.

This is Cytochrome c-551 from Halorhodospira halochloris (Ectothiorhodospira halochloris).